A 563-amino-acid polypeptide reads, in one-letter code: Arginine--tRNA ligase (563 aa).

A 'HIGH' region motif is present at residues 119 to 129; the sequence is ANPTGPLHVGR.

This sequence belongs to the class-I aminoacyl-tRNA synthetase family.

It localises to the cytoplasm. The enzyme catalyses tRNA(Arg) + L-arginine + ATP = L-arginyl-tRNA(Arg) + AMP + diphosphate. This is Arginine--tRNA ligase from Methanocella arvoryzae (strain DSM 22066 / NBRC 105507 / MRE50).